The chain runs to 183 residues: ATP-dependent protease subunit HslV (183 aa).

Thr13 is an active-site residue. Gly168, Cys171, and Thr174 together coordinate Na(+).

This sequence belongs to the peptidase T1B family. HslV subfamily. As to quaternary structure, a double ring-shaped homohexamer of HslV is capped on each side by a ring-shaped HslU homohexamer. The assembly of the HslU/HslV complex is dependent on binding of ATP.

The protein resides in the cytoplasm. It catalyses the reaction ATP-dependent cleavage of peptide bonds with broad specificity.. Allosterically activated by HslU binding. Functionally, protease subunit of a proteasome-like degradation complex believed to be a general protein degrading machinery. The polypeptide is ATP-dependent protease subunit HslV (Xanthomonas euvesicatoria pv. vesicatoria (strain 85-10) (Xanthomonas campestris pv. vesicatoria)).